A 567-amino-acid chain; its full sequence is Serine/threonine-protein kinase SSN3 (567 aa).

In terms of domain architecture, Protein kinase spans 68–470 (YEIIGYIAAG…AINALDHSYF (403 aa)). 74–82 (IAAGTYGKV) serves as a coordination point for ATP. The disordered stretch occupies residues 88–179 (RQSSKSSSST…RNSENTDNRR (92 aa)). The segment covering 90–101 (SSKSSSSTGSDS) has biased composition (low complexity). Composition is skewed to polar residues over residues 102–122 (LAQDTKPTTEFSNTSSLQNAG) and 133–150 (PNSNNISAGGNTNPELST). Residues 167–179 (GDKRNSENTDNRR) are compositionally biased toward basic and acidic residues. Lys-190 is an ATP binding site. The active-site Proton acceptor is the Asp-293. Over residues 546–556 (AVSGNSSSQSS) the composition is skewed to low complexity. The tract at residues 546–567 (AVSGNSSSQSSRNMEPMKKKRK) is disordered.

Belongs to the protein kinase superfamily. CMGC Ser/Thr protein kinase family. CDC2/CDKX subfamily. Component of the SRB8-11 complex, a regulatory module of the Mediator complex. Mg(2+) serves as cofactor.

Its subcellular location is the nucleus. The enzyme catalyses L-seryl-[protein] + ATP = O-phospho-L-seryl-[protein] + ADP + H(+). It catalyses the reaction L-threonyl-[protein] + ATP = O-phospho-L-threonyl-[protein] + ADP + H(+). It carries out the reaction [DNA-directed RNA polymerase] + ATP = phospho-[DNA-directed RNA polymerase] + ADP + H(+). Its function is as follows. Component of the SRB8-11 complex. The SRB8-11 complex is a regulatory module of the Mediator complex which is itself involved in regulation of basal and activated RNA polymerase II-dependent transcription. The SRB8-11 complex may be involved in the transcriptional repression of a subset of genes regulated by Mediator. It may inhibit the association of the Mediator complex with RNA polymerase II to form the holoenzyme complex. The SRB8-11 complex phosphorylates the C-terminal domain (CTD) of the largest subunit of RNA polymerase II. The protein is Serine/threonine-protein kinase SSN3 (SSN3) of Candida glabrata (strain ATCC 2001 / BCRC 20586 / JCM 3761 / NBRC 0622 / NRRL Y-65 / CBS 138) (Yeast).